The following is a 290-amino-acid chain: ATP synthase gamma chain (290 aa).

Belongs to the ATPase gamma chain family. In terms of assembly, F-type ATPases have 2 components, CF(1) - the catalytic core - and CF(0) - the membrane proton channel. CF(1) has five subunits: alpha(3), beta(3), gamma(1), delta(1), epsilon(1). CF(0) has three main subunits: a, b and c.

The protein localises to the cell membrane. In terms of biological role, produces ATP from ADP in the presence of a proton gradient across the membrane. The gamma chain is believed to be important in regulating ATPase activity and the flow of protons through the CF(0) complex. This is ATP synthase gamma chain from Rubrobacter xylanophilus (strain DSM 9941 / JCM 11954 / NBRC 16129 / PRD-1).